The sequence spans 278 residues: Ribosomal RNA small subunit methyltransferase A (278 aa).

S-adenosyl-L-methionine-binding residues include asparagine 28, leucine 30, glycine 55, glutamate 77, aspartate 103, and asparagine 122.

Belongs to the class I-like SAM-binding methyltransferase superfamily. rRNA adenine N(6)-methyltransferase family. RsmA subfamily.

The protein localises to the cytoplasm. It catalyses the reaction adenosine(1518)/adenosine(1519) in 16S rRNA + 4 S-adenosyl-L-methionine = N(6)-dimethyladenosine(1518)/N(6)-dimethyladenosine(1519) in 16S rRNA + 4 S-adenosyl-L-homocysteine + 4 H(+). Its function is as follows. Specifically dimethylates two adjacent adenosines (A1518 and A1519) in the loop of a conserved hairpin near the 3'-end of 16S rRNA in the 30S particle. May play a critical role in biogenesis of 30S subunits. This Cereibacter sphaeroides (strain ATCC 17029 / ATH 2.4.9) (Rhodobacter sphaeroides) protein is Ribosomal RNA small subunit methyltransferase A.